A 493-amino-acid polypeptide reads, in one-letter code: Alpha-amylase-related protein (493 aa).

An N-terminal signal peptide occupies residues 1 to 19 (MFKLAFTLTLCLAGSLSLA). Glutamine 20 carries the pyrrolidone carboxylic acid modification. A disulfide bridge connects residues cysteine 47 and cysteine 103. Positions 117, 168, and 177 each coordinate Ca(2+). A disulfide bridge links cysteine 156 with cysteine 170. Residue arginine 205 participates in chloride binding. Aspartate 207 acts as the Nucleophile in catalysis. Residue histidine 211 participates in Ca(2+) binding. Residue glutamate 244 is the Proton donor of the active site. Chloride-binding residues include asparagine 307 and arginine 342. Disulfide bonds link cysteine 375–cysteine 381, cysteine 417–cysteine 440, and cysteine 447–cysteine 459.

It belongs to the glycosyl hydrolase 13 family. Monomer. Ca(2+) serves as cofactor. It depends on chloride as a cofactor.

It is found in the secreted. The catalysed reaction is Endohydrolysis of (1-&gt;4)-alpha-D-glucosidic linkages in polysaccharides containing three or more (1-&gt;4)-alpha-linked D-glucose units.. The protein is Alpha-amylase-related protein (Amyrel) of Drosophila orena (Fruit fly).